We begin with the raw amino-acid sequence, 402 residues long: Na(+)/H(+) antiporter NhaA 2 (402 aa).

The next 11 helical transmembrane spans lie at 18–38, 63–83, 99–119, 129–149, 158–178, 182–202, 210–230, 258–278, 296–316, 329–349, and 365–385; these read AGGI…NTAL, ALLW…GLEV, SLPL…FYGI, GWAI…ALLG, ALLL…IAIF, GVEL…SAFG, IPYI…GVHA, ALHS…NAGV, IALG…WLAV, WLQV…SLFI, and IGVL…LVLG.

The protein belongs to the NhaA Na(+)/H(+) (TC 2.A.33) antiporter family.

It is found in the cell inner membrane. It catalyses the reaction Na(+)(in) + 2 H(+)(out) = Na(+)(out) + 2 H(+)(in). Functionally, na(+)/H(+) antiporter that extrudes sodium in exchange for external protons. The polypeptide is Na(+)/H(+) antiporter NhaA 2 (Erythrobacter litoralis (strain HTCC2594)).